The following is a 478-amino-acid chain: Mannose-1-phosphate guanylyltransferase (478 aa).

The protein belongs to the mannose-6-phosphate isomerase type 2 family.

The catalysed reaction is alpha-D-mannose 1-phosphate + GTP + H(+) = GDP-alpha-D-mannose + diphosphate. It functions in the pathway nucleotide-sugar biosynthesis; GDP-alpha-D-mannose biosynthesis; GDP-alpha-D-mannose from alpha-D-mannose 1-phosphate (GTP route): step 1/1. In terms of biological role, involved in the biosynthesis of the capsular polysaccharide colanic acid. The polypeptide is Mannose-1-phosphate guanylyltransferase (manC) (Escherichia coli (strain K12)).